An 87-amino-acid chain; its full sequence is MKNNYNRINTFIVYLMVTFSLISIISITECTPNHDPCPPQYAEALCLNGGTCFSVTIMGSDNYNCICAPGFRGWRCQEKDLDHPVNQ.

Residues 1–32 form the signal peptide; that stretch reads MKNNYNRINTFIVYLMVTFSLISIISITECTP. The EGF-like domain occupies 33–77; sequence NHDPCPPQYAEALCLNGGTCFSVTIMGSDNYNCICAPGFRGWRCQ. 3 disulfides stabilise this stretch: Cys37/Cys52, Cys46/Cys65, and Cys67/Cys76.

In terms of processing, O-glycosylated. In terms of tissue distribution, expressed by the venom gland.

It localises to the secreted. This Manica rubida (European giant red ant) protein is U18-myrmicitoxin-Mri1a.